The primary structure comprises 173 residues: Spermidine N(1)-acetyltransferase (173 aa).

An N-acetyltransferase domain is found at 5–162; that stretch reads LTLRALERGD…GRYQDVKRMY (158 aa). Residues Met-28, Glu-33, Glu-41, and 49-52 contribute to the spermine site; that span reads HIHD. Glu-33 serves as a coordination point for Mg(2+). Spermidine-binding residues include Glu-33 and Glu-41. Glu-75 contacts Mg(2+). 84 to 86 is a binding site for spermine; sequence EFQ. Acetyl-CoA-binding positions include 87–89, 94–100, and 127–136; these read III, QGKGFAR, and NPKAVHLYEE. Tyr-134 serves as the catalytic Proton donor.

Belongs to the acetyltransferase family. In terms of assembly, homododecamer; dimer of hexamers. Exists in solution in a variety of protein homooligomeric states including dodecamers in an open state. The presence of the polyamines spermidine or spermine shifts the equilibrium to dodecamers and induces the formation of the closed, symmetric dodecamers.

It localises to the cytoplasm. It carries out the reaction an alkane-alpha,omega-diamine + acetyl-CoA = an N-acetylalkane-alpha,omega-diamine + CoA + H(+). The catalysed reaction is spermidine + acetyl-CoA = N(1)-acetylspermidine + CoA + H(+). It catalyses the reaction spermidine + acetyl-CoA = N(8)-acetylspermidine + CoA + H(+). The enzyme catalyses spermine + acetyl-CoA = N(1)-acetylspermine + CoA + H(+). The protein operates within amine and polyamine degradation; spermidine degradation. It functions in the pathway amine and polyamine degradation; spermine degradation. Its activity is regulated as follows. Allosterically regulated by polyamines. Polyamines trigger conformational changes and induce the symmetric closed dodecameric state of the protein when they bind to their allosteric sites. Functionally, involved in the protection against polyamine toxicity by regulating their concentration. Catalyzes the transfer of an acetyl group from acetyl coenzyme A (AcCoA) to the primary amino groups of spermidine to yield N(1)- and N(8)-acetylspermidine. It can use polyamines such as spermine and N(1)-acetylspermine, but not putrescine or cadaverine. This chain is Spermidine N(1)-acetyltransferase (speG), found in Vibrio cholerae serotype O1 (strain ATCC 39315 / El Tor Inaba N16961).